The primary structure comprises 460 residues: MDSSWEASVTDSINAIYLLFSAYLVFVMQLGFAMLCAGSVRAKNAMNIMLTNVVDAVVGSLSYYLFGFAFAFGDSNPFIGASYFALKDIPSSSYDYSFFLYQWAFAIAVAGITSGSIAERTQFTAYLVFSFFLTGFVYPVVAHWLWSSNGWLSPNSTYLLFGSGAIDFAGSGVVHLVGGIAGFWGSIVEGPRVGRFDAFGNPVKMRGHNATLVVLGTLLLWFGWFGFNPGSFNKILVAYPHMADQGNWTSVGRTAVTTTLAGSTAGIVTLFGRRLLVGHWDAMDVCNGVLGGFVAITSGCSVVEPWAAILCGFCAAWVLIGLNILALKFKFDDPLEAAQLHGGCGAWGLIFTGLFAKEEFVLQAYNSGKTQIIRPSGLILGGGWGLFGAQIVELLSIVVWVSLTMGPLFYLLQKLGILRISSDEEVAGLDISSHGGYAYDASQEESNARFYGEYLRMQQQ.

10 consecutive transmembrane segments (helical) span residues 15–37 (AIYLLFSAYLVFVMQLGFAMLCA), 50–72 (LTNVVDAVVGSLSYYLFGFAFAF), 98–117 (FFLYQWAFAIAVAGITSGSI), 124–146 (TAYLVFSFFLTGFVYPVVAHWLW), 166–188 (IDFAGSGVVHLVGGIAGFWGSIV), 209–227 (NATLVVLGTLLLWFGWFGF), 255–277 (AVTTTLAGSTAGIVTLFGRRLLV), 305–327 (PWAAILCGFCAAWVLIGLNILAL), 337–356 (AAQLHGGCGAWGLIFTGLFA), and 377–399 (GLILGGGWGLFGAQIVELLSIVV).

It belongs to the ammonia transporter channel (TC 1.A.11.2) family. Leaves.

It localises to the membrane. Ammonium transporter that may be involved in ammonium transport throughout the plant. The polypeptide is Ammonium transporter 1 member 3 (AMT1-3) (Solanum lycopersicum (Tomato)).